The following is a 134-amino-acid chain: Aspartate 1-decarboxylase (134 aa).

The active-site Schiff-base intermediate with substrate; via pyruvic acid is the S25. S25 is subject to Pyruvic acid (Ser). T57 lines the substrate pocket. Y58 functions as the Proton donor in the catalytic mechanism. A substrate-binding site is contributed by 73–75 (GAA).

This sequence belongs to the PanD family. Heterooctamer of four alpha and four beta subunits. Requires pyruvate as cofactor. In terms of processing, is synthesized initially as an inactive proenzyme, which is activated by self-cleavage at a specific serine bond to produce a beta-subunit with a hydroxyl group at its C-terminus and an alpha-subunit with a pyruvoyl group at its N-terminus.

Its subcellular location is the cytoplasm. The catalysed reaction is L-aspartate + H(+) = beta-alanine + CO2. It participates in cofactor biosynthesis; (R)-pantothenate biosynthesis; beta-alanine from L-aspartate: step 1/1. Functionally, catalyzes the pyruvoyl-dependent decarboxylation of aspartate to produce beta-alanine. This is Aspartate 1-decarboxylase from Geobacter sp. (strain M21).